A 544-amino-acid polypeptide reads, in one-letter code: NXPE family member 4 (544 aa).

The first 27 residues, 1–27, serve as a signal peptide directing secretion; it reads MKISMINYKSLLALLFILASWIIFTVF. N-linked (GlcNAc...) asparagine glycans are attached at residues Asn29, Asn38, Asn47, Asn48, Asn92, Asn160, and Asn210.

This sequence belongs to the NXPE family.

The protein localises to the secreted. In Homo sapiens (Human), this protein is NXPE family member 4 (NXPE4).